Reading from the N-terminus, the 269-residue chain is Myelin protein zero-like protein 1 (269 aa).

The first 35 residues, 1–35 (MAAPAGAGALIASPDRRRCLWSVLAAALGLLTYGV), serve as a signal peptide directing secretion. One can recognise an Ig-like V-type domain in the interval 36–146 (SALEVYTPKE…VKNPPDIVVQ (111 aa)). Over 36–162 (SALEVYTPKE…YVVEKEILPA (127 aa)) the chain is Extracellular. Residues N50, N64, and N130 are each glycosylated (N-linked (GlcNAc...) asparagine). C58 and C135 are joined by a disulfide. A helical membrane pass occupies residues 163-183 (FPVWVVVGIVTAVVLGLTLLI). Residues 184–269 (TMILAVIYRR…SVVYADIRKN (86 aa)) are Cytoplasmic-facing. The interval 202 to 238 (GCNTSENVSPVKQVSRKSPSDTEGLVKSLPSGSHQGP) is disordered. Positions 203–213 (CNTSENVSPVK) are enriched in polar residues. Phosphoserine occurs at positions 206, 210, 219, and 221. The ITIM motif 1 motif lies at 239–244 (VIYAQL). Y241 is subject to Phosphotyrosine. At S260 the chain carries Phosphoserine. Positions 261-266 (VVYADI) match the ITIM motif 2 motif. A Phosphotyrosine modification is found at Y263.

The protein belongs to the myelin P0 protein family. In terms of assembly, interacts with phosphorylated PTPN11/SHP-2. Phosphorylated on tyrosine residues upon stimulation with pervanadate and concanavalin-A (ConA). Phosphorylation at Tyr-241 and Tyr-263 is required for interaction with PTPN11/SHP-2. Dephosphorylated by PTPN11/SHP-2 (in vitro). Post-translationally, N-glycosylated.

It is found in the membrane. Functionally, cell surface receptor, which is involved in signal transduction processes. Recruits PTPN11/SHP-2 to the cell membrane and is a putative substrate of PTPN11/SHP-2. Is a major receptor for concanavalin-A (ConA) and is involved in cellular signaling induced by ConA, which probably includes Src family tyrosine-protein kinases. May be involved in regulation of integrin-mediated cell motility. In Bos taurus (Bovine), this protein is Myelin protein zero-like protein 1 (MPZL1).